We begin with the raw amino-acid sequence, 130 residues long: Glutamate-rich protein 4 (130 aa).

A compositionally biased stretch (acidic residues) spans 91–104 (EEEEESSKEEEEDQ). The interval 91–130 (EEEEESSKEEEEDQEPQRKQEEEHLEACPAPHPPDFEMMI) is disordered. Basic and acidic residues predominate over residues 105-116 (EPQRKQEEEHLE).

The protein is Glutamate-rich protein 4 (ERICH4) of Homo sapiens (Human).